Consider the following 294-residue polypeptide: Cyclin-G1 (294 aa).

This sequence belongs to the cyclin family. Cyclin G subfamily. As to quaternary structure, binds to B' regulatory B subunits of protein phosphatase A (PP2A) following induction by p53 (in vitro). As to expression, highest levels in kidney, heart and skeletal muscle.

It is found in the nucleus. In terms of biological role, may play a role in growth regulation. Is associated with G2/M phase arrest in response to DNA damage. May be an intermediate by which p53 mediates its role as an inhibitor of cellular proliferation. The chain is Cyclin-G1 (Ccng1) from Mus musculus (Mouse).